A 266-amino-acid chain; its full sequence is tRNA pseudouridine synthase A (266 aa).

The active-site Nucleophile is the Asp52. A substrate-binding site is contributed by Tyr113.

Belongs to the tRNA pseudouridine synthase TruA family. As to quaternary structure, homodimer.

It catalyses the reaction uridine(38/39/40) in tRNA = pseudouridine(38/39/40) in tRNA. In terms of biological role, formation of pseudouridine at positions 38, 39 and 40 in the anticodon stem and loop of transfer RNAs. In Agrobacterium fabrum (strain C58 / ATCC 33970) (Agrobacterium tumefaciens (strain C58)), this protein is tRNA pseudouridine synthase A.